Consider the following 588-residue polypeptide: Aspartate--tRNA ligase (588 aa).

Glutamate 174 lines the L-aspartate pocket. The interval 198 to 201 is aspartate; sequence QLFK. An L-aspartate-binding site is contributed by arginine 220. ATP contacts are provided by residues 220–222 and glutamine 229; that span reads RDE. Histidine 448 lines the L-aspartate pocket. An ATP-binding site is contributed by glutamate 482. Residue arginine 489 coordinates L-aspartate. 534–537 contacts ATP; that stretch reads GIDR.

It belongs to the class-II aminoacyl-tRNA synthetase family. Type 1 subfamily. In terms of assembly, homodimer.

It is found in the cytoplasm. It catalyses the reaction tRNA(Asp) + L-aspartate + ATP = L-aspartyl-tRNA(Asp) + AMP + diphosphate. Functionally, catalyzes the attachment of L-aspartate to tRNA(Asp) in a two-step reaction: L-aspartate is first activated by ATP to form Asp-AMP and then transferred to the acceptor end of tRNA(Asp). This chain is Aspartate--tRNA ligase, found in Xanthomonas campestris pv. campestris (strain 8004).